The chain runs to 532 residues: Small ribosomal subunit protein uS2cz (532 aa).

An N-terminal extension region spans residues 1–271 (METLEKNFKK…SPISSKEKKA (271 aa)). TRAM domains follow at residues 38-97 (ALQA…SILN), 127-186 (DFKV…KPIL), and 197-260 (NQMI…KILK).

The protein belongs to the universal ribosomal protein uS2 family.

The protein localises to the plastid. It localises to the chloroplast. In Tetradesmus obliquus (Green alga), this protein is Small ribosomal subunit protein uS2cz (rps2-1).